The sequence spans 492 residues: Probable proline dehydrogenase, mitochondrial (492 aa).

It belongs to the proline oxidase family. FAD serves as cofactor.

It localises to the mitochondrion. The catalysed reaction is L-proline + a quinone = (S)-1-pyrroline-5-carboxylate + a quinol + H(+). In terms of biological role, converts proline to delta-1-pyrroline-5-carboxylate. This Schizosaccharomyces pombe (strain 972 / ATCC 24843) (Fission yeast) protein is Probable proline dehydrogenase, mitochondrial.